The chain runs to 301 residues: Lycopene elongase/hydratase (301 aa).

Residues 1–20 are disordered; it reads MSADMAAQSESGEGGDDGRA. A run of 9 helical transmembrane segments spans residues 39-59, 61-81, 110-130, 133-153, 160-180, 186-206, 229-249, 252-272, and 276-296; these read FWLY…SALA, LFGL…NVFL, PVNT…FAVA, VAWP…APPF, LLDS…YAAV, PMLA…FSAI, TYWY…AVDL, GALL…GVDV, and YWWY…GALW.

It belongs to the UbiA prenyltransferase family.

Its subcellular location is the cell membrane. The enzyme catalyses all-trans-lycopene + dimethylallyl diphosphate + H2O = dihydroisopentenyldehydrorhodopin + diphosphate. It carries out the reaction isopentenyldehydrorhodopin + dimethylallyl diphosphate + H2O = dihydrobisanhydrobacterioruberin + diphosphate. It participates in carotenoid biosynthesis. In terms of biological role, involved in the biosynthesis of the acyclic C50 carotenoid bacterioruberin (BR). Acts as a bifunctional elongase/hydratase that catalyzes the elongation of lycopene by attaching a C(5) isoprene unit at C-2, as well as the hydroxylation of the previous end of the molecule. The enzyme acts at both ends of the substrate, and catalyzes the conversion of lycopene to the C(45) intermediate dihydroisopentenyldehydrorhodopin (DH-IDR) and the conversion of isopentenyldehydrorhodopin (IDR) to the C(50) carotenoid dihydrobisanhydrobacterioruberin (DH-BABR). Can also catalyze the conversion of lycopene to tetrahydrobisanhydrobacterioruberin (TH-BABR). This chain is Lycopene elongase/hydratase, found in Haloferax volcanii (strain ATCC 29605 / DSM 3757 / JCM 8879 / NBRC 14742 / NCIMB 2012 / VKM B-1768 / DS2) (Halobacterium volcanii).